Reading from the N-terminus, the 465-residue chain is Clusterin-like protein 1 (465 aa).

Residues 1-20 form the signal peptide; the sequence is MKPSLLVFTVYLLWLKDCHC. Positions 62–106 form a coiled coil; sequence MMERREEEHTNLMKTLKKCKEEKQEALKLMNEVQEHLEEEESLCQ. 4 cysteine pairs are disulfide-bonded: Cys-105–Cys-333, Cys-116–Cys-325, Cys-119–Cys-322, and Cys-124–Cys-315. Residues Asn-196, Asn-257, Asn-285, Asn-311, Asn-351, Asn-412, and Asn-430 are each glycosylated (N-linked (GlcNAc...) asparagine).

The protein belongs to the clusterin family. As to expression, retina-specific (at protein level). In the light-adapted retina, expressed in the outer segment of cone photoreceptors. In the dark-adapted retina, strongly expressed in the outer plexiform layer in the region of contact between the cone pedicles and second order neurons with little or no expression in the cone photoreceptor outer segments.

Its subcellular location is the secreted. The chain is Clusterin-like protein 1 (CLUL1) from Canis lupus familiaris (Dog).